Here is a 101-residue protein sequence, read N- to C-terminus: Replication restart protein PriB (101 aa).

An SSB domain is found at 1-101 (MTTNNLVLAG…LHAENVELKT (101 aa)).

It belongs to the PriB family. As to quaternary structure, homodimer. Interacts with PriA and DnaT. Component of the replication restart primosome. Primosome assembly occurs via a 'hand-off' mechanism. PriA binds to replication forks, subsequently PriB then DnaT bind; DnaT then displaces ssDNA to generate the helicase loading substrate.

Its function is as follows. Involved in the restart of stalled replication forks, which reloads the replicative helicase on sites other than the origin of replication; the PriA-PriB pathway is the major replication restart pathway. During primosome assembly it facilitates complex formation between PriA and DnaT on DNA; stabilizes PriA on DNA. Stimulates the DNA unwinding activity of PriA helicase. This chain is Replication restart protein PriB, found in Shewanella halifaxensis (strain HAW-EB4).